The following is a 475-amino-acid chain: Dihydrolipoyl dehydrogenase (475 aa).

FAD is bound by residues Glu36–Cys45, Lys54, and Gly117. Cysteines 45 and 50 form a disulfide. Residues Gly182–Ile186, Glu205, Val238, and Ala270–Arg273 each bind NAD(+). Asp313 and Ala321 together coordinate FAD. His445 (proton acceptor) is an active-site residue.

Belongs to the class-I pyridine nucleotide-disulfide oxidoreductase family. It depends on FAD as a cofactor.

The protein resides in the cytoplasm. It carries out the reaction N(6)-[(R)-dihydrolipoyl]-L-lysyl-[protein] + NAD(+) = N(6)-[(R)-lipoyl]-L-lysyl-[protein] + NADH + H(+). In terms of biological role, the branched-chain alpha-keto dehydrogenase complex catalyzes the overall conversion of alpha-keto acids to acyl-CoA and CO(2). It contains multiple copies of 3 enzymatic components: branched-chain alpha-keto acid decarboxylase (E1), lipoamide acyltransferase (E2) and lipoamide dehydrogenase (E3). The protein is Dihydrolipoyl dehydrogenase (lpd) of Vibrio cholerae serotype O1 (strain ATCC 39315 / El Tor Inaba N16961).